A 464-amino-acid polypeptide reads, in one-letter code: tRNA modification GTPase MnmE (464 aa).

The (6S)-5-formyl-5,6,7,8-tetrahydrofolate site is built by arginine 23, glutamate 84, and arginine 123. Residues glycine 216–leucine 386 form the TrmE-type G domain. Asparagine 226 is a K(+) binding site. Residues asparagine 226–serine 231, threonine 245–threonine 251, and aspartate 270–glycine 273 each bind GTP. Serine 230 provides a ligand contact to Mg(2+). Residues threonine 245, isoleucine 247, and threonine 250 each coordinate K(+). Threonine 251 contributes to the Mg(2+) binding site. Lysine 464 contributes to the (6S)-5-formyl-5,6,7,8-tetrahydrofolate binding site.

This sequence belongs to the TRAFAC class TrmE-Era-EngA-EngB-Septin-like GTPase superfamily. TrmE GTPase family. As to quaternary structure, homodimer. Heterotetramer of two MnmE and two MnmG subunits. K(+) is required as a cofactor.

The protein resides in the cytoplasm. Exhibits a very high intrinsic GTPase hydrolysis rate. Involved in the addition of a carboxymethylaminomethyl (cmnm) group at the wobble position (U34) of certain tRNAs, forming tRNA-cmnm(5)s(2)U34. The chain is tRNA modification GTPase MnmE from Roseiflexus castenholzii (strain DSM 13941 / HLO8).